A 382-amino-acid polypeptide reads, in one-letter code: Succinate--CoA ligase [ADP-forming] subunit beta (382 aa).

Residues 9 to 240 (KELFAKYGVK…PRDITEFEAY (232 aa)) enclose the ATP-grasp domain. Residues Lys-45, 52–54 (GRG), Leu-94, and Glu-99 contribute to the ATP site. Residues Asn-193 and Asp-207 each contribute to the Mg(2+) site. Substrate-binding positions include Asn-260 and 317–319 (GIT).

The protein belongs to the succinate/malate CoA ligase beta subunit family. As to quaternary structure, heterotetramer of two alpha and two beta subunits. It depends on Mg(2+) as a cofactor.

The enzyme catalyses succinate + ATP + CoA = succinyl-CoA + ADP + phosphate. It carries out the reaction GTP + succinate + CoA = succinyl-CoA + GDP + phosphate. It participates in carbohydrate metabolism; tricarboxylic acid cycle; succinate from succinyl-CoA (ligase route): step 1/1. Its function is as follows. Succinyl-CoA synthetase functions in the citric acid cycle (TCA), coupling the hydrolysis of succinyl-CoA to the synthesis of either ATP or GTP and thus represents the only step of substrate-level phosphorylation in the TCA. The beta subunit provides nucleotide specificity of the enzyme and binds the substrate succinate, while the binding sites for coenzyme A and phosphate are found in the alpha subunit. In Pyrobaculum calidifontis (strain DSM 21063 / JCM 11548 / VA1), this protein is Succinate--CoA ligase [ADP-forming] subunit beta.